The sequence spans 163 residues: Type-2 ice-structuring protein (163 aa).

The N-terminal stretch at 1-17 (MLTVSLLVCAMMALTQA) is a signal peptide. The propeptide occupies 18–34 (NDDKILKGTATEAGPVS). The region spanning 39 to 163 (PNCPAGWQPL…SHKSVCAMTF (125 aa)) is the C-type lectin domain. Disulfide bonds link C41–C52, C69–C159, C103–C134, C123–C145, and C135–C151.

In terms of processing, the N-terminus is blocked.

It localises to the secreted. Its function is as follows. Antifreeze proteins lower the blood freezing point. The protein is Type-2 ice-structuring protein of Hemitripterus americanus (Sea raven).